Reading from the N-terminus, the 561-residue chain is Putative transport protein YbjL (561 aa).

The next 5 membrane-spanning stretches (helical) occupy residues 8–28 (LLNG…LCLG), 32–52 (LGSV…LLGQ), 66–86 (FMLF…SIFF), 94–114 (MLAL…GKLF), and 158–178 (NLSL…IVGA). RCK C-terminal domains are found at residues 200–288 (RGLD…SFRN) and 292–373 (VFDR…RIGF). Transmembrane regions (helical) follow at residues 383-403 (LLAF…TFQF), 406-426 (FSFG…LGFL), 447-467 (FGLM…ISNG), 475-495 (MLIA…LFGA), and 540-560 (AIAN…WPGL).

The protein belongs to the AAE transporter (TC 2.A.81) family. YbjL subfamily.

The protein resides in the cell membrane. The protein is Putative transport protein YbjL of Salmonella typhi.